The primary structure comprises 151 residues: Small ribosomal subunit protein uS15y (151 aa).

This sequence belongs to the universal ribosomal protein uS15 family.

The polypeptide is Small ribosomal subunit protein uS15y (RPS13B) (Arabidopsis thaliana (Mouse-ear cress)).